A 1153-amino-acid polypeptide reads, in one-letter code: Myosin-3 (1153 aa).

Residues 104 to 153 form the Myosin N-terminal SH3-like domain; sequence KKVLQFWVQLPNGNWELGKIMSTSGEESVIVVTEGKVLKVKSETLVPANP. In terms of domain architecture, Myosin motor spans 157–829; the sequence is DGVDDLMQLS…QIGVLEDTRN (673 aa). ATP is bound by residues 248–255 and 296–304; these read GESGAGKT and NDNSSRFGK. Actin-binding regions lie at residues 581–615 and 709–731; these read LFEK…KQHL and LFQL…KPNN. IQ domains are found at residues 831–860, 854–883, and 903–932; these read TLHG…GITI, LKTG…RHRA, and TVDA…LSSG. Residues 948–996 adopt a coiled-coil conformation; it reads YLSDLQRRVLRTEAALREKEEENDILRQRVQQYDNRWSEYETKMKSMEE. Residues 1020–1050 are disordered; the sequence is DSARNSDASVNASDATDLDSGGSHYQMGHGR. A compositionally biased stretch (polar residues) spans 1024-1033; it reads NSDASVNASD.

Belongs to the TRAFAC class myosin-kinesin ATPase superfamily. Myosin family. Plant myosin class VIII subfamily. In terms of assembly, homodimer.

Myosin heavy chain that is required for the cell cycle-regulated transport of various organelles and proteins for their segregation. Functions by binding with its tail domain to receptor proteins on organelles and exerting force with its N-terminal motor domain against actin filaments, thereby transporting its cargo along polarized actin cables. This chain is Myosin-3 (VIII-A), found in Arabidopsis thaliana (Mouse-ear cress).